The sequence spans 203 residues: Urease accessory protein UreG (203 aa).

A GTP-binding site is contributed by 14–21 (GPVGSGKT).

Belongs to the SIMIBI class G3E GTPase family. UreG subfamily. As to quaternary structure, homodimer. UreD, UreF and UreG form a complex that acts as a GTP-hydrolysis-dependent molecular chaperone, activating the urease apoprotein by helping to assemble the nickel containing metallocenter of UreC. The UreE protein probably delivers the nickel.

The protein localises to the cytoplasm. Facilitates the functional incorporation of the urease nickel metallocenter. This process requires GTP hydrolysis, probably effectuated by UreG. In Rhizobium johnstonii (strain DSM 114642 / LMG 32736 / 3841) (Rhizobium leguminosarum bv. viciae), this protein is Urease accessory protein UreG.